Consider the following 496-residue polypeptide: Glutamyl-tRNA(Gln) amidotransferase subunit A (496 aa).

Active-site charge relay system residues include lysine 75 and serine 150. Serine 174 serves as the catalytic Acyl-ester intermediate.

The protein belongs to the amidase family. GatA subfamily. As to quaternary structure, heterotrimer of A, B and C subunits.

It carries out the reaction L-glutamyl-tRNA(Gln) + L-glutamine + ATP + H2O = L-glutaminyl-tRNA(Gln) + L-glutamate + ADP + phosphate + H(+). Its function is as follows. Allows the formation of correctly charged Gln-tRNA(Gln) through the transamidation of misacylated Glu-tRNA(Gln) in organisms which lack glutaminyl-tRNA synthetase. The reaction takes place in the presence of glutamine and ATP through an activated gamma-phospho-Glu-tRNA(Gln). This is Glutamyl-tRNA(Gln) amidotransferase subunit A from Burkholderia vietnamiensis (strain G4 / LMG 22486) (Burkholderia cepacia (strain R1808)).